The sequence spans 78 residues: Large ribosomal subunit protein bL28 (78 aa).

A disordered region spans residues 1-23; that stretch reads MSRVCQVTGKKPMVGNNRSHAKN.

This sequence belongs to the bacterial ribosomal protein bL28 family.

The polypeptide is Large ribosomal subunit protein bL28 (Shewanella sediminis (strain HAW-EB3)).